We begin with the raw amino-acid sequence, 545 residues long: MVGEETSLRNRLSRSAENPEQDEAQKNLLDTHRNGHITMKQLIAKKRQLAAEAEELKPLFLKEVGCHFDDFVTNLIDKSASLDNGGCALTTFSILEEMKNNHRAKDLRAPPEQGKIFISRRSLLDELFEVDHIRTIYHMFIALLIIFILSTLVVDYIDEGRLVLEFSLLAYAFGQFPIVIWTWWAMFLSTLAIPYFLFQRWAHGYSKSSHPLIYSLIHGAFFLVFQLGILGFIPTYVVLAYTLPPASRFILILEQIRLVMKAHSYVRENVPRVLSAAKEKSSTVPVPTVNQYLYFLFAPTLIYRDSYPRTPTVRWGYVAMQFLQVFGCLFYVYYIFERLCAPLFRNIKQEPFSARVLVLCVFNSILPGVLMLFLSFFAFLHCWLNAFAEMLRFGDRMFYKDWWNSTSYSNYYRTWNVVVHDWLYYYVYKDLLWFFSKRFRPAAMLAVFALSAVVHEYALAVCLSYFYPVLFVLFMFFGMAFNFIVNDSRKRPVWNIMVRASLFLGHGVILCFYSQEWYARQRCPLKNPTFLDYVRPRTWTCRYVF.

Residue methionine 1 is modified to N-acetylmethionine. Residues methionine 1 to alanine 24 form a disordered region. Over methionine 1 to isoleucine 133 the chain is Cytoplasmic. Serine 7 bears the Phosphoserine mark. Over residues arginine 9–asparagine 18 the composition is skewed to polar residues. Histidine 132 is a cholesterol binding site. Residues arginine 134 to aspartate 155 form a helical membrane-spanning segment. Topologically, residues tyrosine 156–glutamine 175 are lumenal. Residues phenylalanine 176–tryptophan 201 form a helical membrane-spanning segment. The Cytoplasmic segment spans residues alanine 202–isoleucine 213. The helical transmembrane segment at tyrosine 214 to leucine 239 threads the bilayer. The Lumenal segment spans residues alanine 240–serine 247. A helical membrane pass occupies residues arginine 248–proline 271. Over arginine 272–arginine 314 the chain is Cytoplasmic. The helical transmembrane segment at tryptophan 315–isoleucine 347 threads the bilayer. Over lysine 348–serine 364 the chain is Lumenal. Residues isoleucine 365–methionine 390 traverse the membrane as a helical segment. The Cytoplasmic segment spans residues leucine 391–arginine 438. Residues phenylalanine 398–asparagine 404 carry the FYXDWWN motif motif. The an acyl-CoA site is built by asparagine 410, arginine 413, asparagine 416, histidine 420, tyrosine 428, and serine 451. The chain crosses the membrane as a helical span at residues phenylalanine 439–leucine 463. Histidine 455 is a catalytic residue. At serine 464–valine 469 the chain is on the lumenal side. A helical membrane pass occupies residues leucine 470–valine 485. Residues asparagine 486–arginine 491 lie on the Cytoplasmic side of the membrane. The chain crosses the membrane as a helical span at residues proline 492–cysteine 523. The cysteines at positions 523 and 541 are disulfide-linked. At proline 524–phenylalanine 545 the chain is on the lumenal side.

This sequence belongs to the membrane-bound acyltransferase family. Sterol o-acyltransferase subfamily. As to quaternary structure, may form homo- or heterodimers. Interacts with UBIAD1.

The protein resides in the endoplasmic reticulum membrane. It catalyses the reaction a sterol + a long-chain fatty acyl-CoA = a long-chain 3-hydroxysterol ester + CoA. The catalysed reaction is cholesterol + an acyl-CoA = a cholesterol ester + CoA. The enzyme catalyses cholesterol + (9Z)-octadecenoyl-CoA = cholesteryl (9Z-octadecenoate) + CoA. It carries out the reaction cholesterol + hexadecanoyl-CoA = cholesteryl hexadecanoate + CoA. It catalyses the reaction octadecanoyl-CoA + cholesterol = cholesteryl octadecanoate + CoA. The catalysed reaction is (9Z,12Z)-octadecadienoyl-CoA + cholesterol = cholesteryl (9Z,12Z)-octadecadienoate + CoA. The enzyme catalyses (5Z,8Z,11Z,14Z)-eicosatetraenoyl-CoA + cholesterol = cholesteryl (5Z,8Z,11Z,14Z)-eicosatetraenoate + CoA. It carries out the reaction (9Z)-hexadecenoyl-CoA + cholesterol = cholesteryl (9Z)-hexadecenoate + CoA. It catalyses the reaction (11Z)-octadecenoyl-CoA + cholesterol = cholesteryl (11Z)-octadecenoate + CoA. The catalysed reaction is (7Z)-octadecenoyl-CoA + cholesterol = cholesteryl (7Z)-octadecenoate + CoA. Catalyzes the formation of fatty acid-cholesterol esters, which are less soluble in membranes than cholesterol. Plays a role in lipoprotein assembly and dietary cholesterol absorption. Preferentially utilizes oleoyl-CoA ((9Z)-octadecenoyl-CoA) as substrate: shows a higher activity towards an acyl-CoA substrate with a double bond at the delta-9 position (9Z) than towards saturated acyl-CoA or an unsaturated acyl-CoA with a double bond at the delta-7 (7Z) or delta-11 (11Z) positions. This chain is Sterol O-acyltransferase 1, found in Rattus norvegicus (Rat).